Consider the following 279-residue polypeptide: Large ribosomal subunit protein uL2 (279 aa).

The interval 224 to 279 (AMNPIDHPHGGGEGRTSGGRHPVTPWGKGTKGNRTRKSKASDKLIVRSRHAKKKGR) is disordered. Over residues 269-279 (VRSRHAKKKGR) the composition is skewed to basic residues.

The protein belongs to the universal ribosomal protein uL2 family. In terms of assembly, part of the 50S ribosomal subunit. Forms a bridge to the 30S subunit in the 70S ribosome.

Functionally, one of the primary rRNA binding proteins. Required for association of the 30S and 50S subunits to form the 70S ribosome, for tRNA binding and peptide bond formation. It has been suggested to have peptidyltransferase activity; this is somewhat controversial. Makes several contacts with the 16S rRNA in the 70S ribosome. The protein is Large ribosomal subunit protein uL2 of Cereibacter sphaeroides (strain ATCC 17029 / ATH 2.4.9) (Rhodobacter sphaeroides).